The chain runs to 139 residues: Phosphoribosyl-AMP cyclohydrolase (139 aa).

Aspartate 91 contacts Mg(2+). A Zn(2+)-binding site is contributed by cysteine 92. Mg(2+) contacts are provided by aspartate 93 and aspartate 95. Zn(2+)-binding residues include cysteine 110 and cysteine 117.

Belongs to the PRA-CH family. As to quaternary structure, homodimer. The cofactor is Mg(2+). It depends on Zn(2+) as a cofactor.

The protein resides in the cytoplasm. It catalyses the reaction 1-(5-phospho-beta-D-ribosyl)-5'-AMP + H2O = 1-(5-phospho-beta-D-ribosyl)-5-[(5-phospho-beta-D-ribosylamino)methylideneamino]imidazole-4-carboxamide. It functions in the pathway amino-acid biosynthesis; L-histidine biosynthesis; L-histidine from 5-phospho-alpha-D-ribose 1-diphosphate: step 3/9. Functionally, catalyzes the hydrolysis of the adenine ring of phosphoribosyl-AMP. This chain is Phosphoribosyl-AMP cyclohydrolase, found in Brucella abortus (strain S19).